Here is a 320-residue protein sequence, read N- to C-terminus: L-lactate dehydrogenase (320 aa).

NAD(+) is bound by residues Val-19, Asp-40, Arg-45, and 85 to 86 (GA). Substrate-binding residues include Gln-88 and Arg-94. NAD(+) contacts are provided by residues Ser-107, 124–126 (ITN), and Ser-149. 126-129 (NPVD) provides a ligand contact to substrate. Substrate is bound at residue 154 to 157 (DSAR). Residues Arg-159 and His-174 each coordinate beta-D-fructose 1,6-bisphosphate. His-181 (proton acceptor) is an active-site residue. Tyr-228 is subject to Phosphotyrosine. Substrate is bound at residue Thr-237.

Belongs to the LDH/MDH superfamily. LDH family. As to quaternary structure, homotetramer.

It is found in the cytoplasm. The catalysed reaction is (S)-lactate + NAD(+) = pyruvate + NADH + H(+). It participates in fermentation; pyruvate fermentation to lactate; (S)-lactate from pyruvate: step 1/1. Allosterically activated by fructose 1,6-bisphosphate (FBP). Its function is as follows. Catalyzes the conversion of lactate to pyruvate. This Bifidobacterium animalis subsp. lactis (strain AD011) protein is L-lactate dehydrogenase.